The primary structure comprises 229 residues: General odorant-binding protein 69 (229 aa).

The N-terminal stretch at 1–20 (MDRLLLVLLSSASLLLTVYG) is a signal peptide. Cys-66 and Cys-106 are joined by a disulfide.

It belongs to the PBP/GOBP family.

The protein localises to the secreted. Functionally, present in the aqueous fluid surrounding olfactory sensory dendrites and are thought to aid in the capture and transport of hydrophobic odorants into and through this fluid. The protein is General odorant-binding protein 69 (Obp69) of Anopheles gambiae (African malaria mosquito).